The chain runs to 208 residues: Octanoyltransferase (208 aa).

In terms of domain architecture, BPL/LPL catalytic spans 30–208 (GTASEAVFIL…ILKQEFYKIF (179 aa)). Residues 69–76 (RGGKFTYH), 142–144 (SIG), and 155–157 (GVA) contribute to the substrate site. The active-site Acyl-thioester intermediate is the cysteine 173.

The protein belongs to the LipB family.

Its subcellular location is the cytoplasm. It catalyses the reaction octanoyl-[ACP] + L-lysyl-[protein] = N(6)-octanoyl-L-lysyl-[protein] + holo-[ACP] + H(+). Its pathway is protein modification; protein lipoylation via endogenous pathway; protein N(6)-(lipoyl)lysine from octanoyl-[acyl-carrier-protein]: step 1/2. Its function is as follows. Catalyzes the transfer of endogenously produced octanoic acid from octanoyl-acyl-carrier-protein onto the lipoyl domains of lipoate-dependent enzymes. Lipoyl-ACP can also act as a substrate although octanoyl-ACP is likely to be the physiological substrate. This chain is Octanoyltransferase, found in Orientia tsutsugamushi (strain Ikeda) (Rickettsia tsutsugamushi).